Here is a 291-residue protein sequence, read N- to C-terminus: MFKELALIGTTASGKSDLAFELAKEFEGVILSLDSLALYKEIDIASAKPKSWQLEAVRHFGVDEIYPDEEFSVGAFFEIYKNAKEIARLRGCPLIITGGSGFYLKAMLSGLAPDVPKCELNLSNEEIYELALQNDPEFAGKFSQNDSYRLEKWYQIYKFSGQIPSIWLRENTKPSVIKELAIFEILWDKDELRARIAKRTKNMLDEGLIDEAKFLFEKYKSEPKPLKSIGLKECKQFLEGEISKNELETLIATHTAQLAKRQRTFNRSQFEKKFVGDLAQTRSEILKFLKG.

9–16 (GTTASGKS) contributes to the ATP binding site. Position 11 to 16 (11 to 16 (TASGKS)) interacts with substrate. Residues 34-37 (DSLA) form an interaction with substrate tRNA region.

The protein belongs to the IPP transferase family. Monomer. It depends on Mg(2+) as a cofactor.

The catalysed reaction is adenosine(37) in tRNA + dimethylallyl diphosphate = N(6)-dimethylallyladenosine(37) in tRNA + diphosphate. Its function is as follows. Catalyzes the transfer of a dimethylallyl group onto the adenine at position 37 in tRNAs that read codons beginning with uridine, leading to the formation of N6-(dimethylallyl)adenosine (i(6)A). The protein is tRNA dimethylallyltransferase of Campylobacter concisus (strain 13826).